We begin with the raw amino-acid sequence, 154 residues long: Lipoprotein signal peptidase (154 aa).

The next 2 membrane-spanning stretches (helical) occupy residues 55–75 (GHMW…IYIM) and 84–104 (LFSI…IDRI). Active-site residues include Asp-111 and Asp-129. Residues 124 to 144 (IFNVADAALSVGVVLMLVYVF) traverse the membrane as a helical segment.

Belongs to the peptidase A8 family.

The protein localises to the cell membrane. The catalysed reaction is Release of signal peptides from bacterial membrane prolipoproteins. Hydrolyzes -Xaa-Yaa-Zaa-|-(S,diacylglyceryl)Cys-, in which Xaa is hydrophobic (preferably Leu), and Yaa (Ala or Ser) and Zaa (Gly or Ala) have small, neutral side chains.. It functions in the pathway protein modification; lipoprotein biosynthesis (signal peptide cleavage). In terms of biological role, this protein specifically catalyzes the removal of signal peptides from prolipoproteins. This is Lipoprotein signal peptidase from Listeria innocua serovar 6a (strain ATCC BAA-680 / CLIP 11262).